The following is a 112-amino-acid chain: C-X-C motif chemokine 6 (112 aa).

An N-terminal signal peptide occupies residues 1–36 (MRLLSSRAARVSGPSGSLCALLALLLLTPPGPLASA). 2 cysteine pairs are disulfide-bonded: Cys48–Cys74 and Cys50–Cys90.

It belongs to the intercrine alpha (chemokine CxC) family.

The protein resides in the secreted. Chemotactic for neutrophil granulocytes. Signals through binding and activation of its receptors (CXCR1 and CXCR2). In addition to its chemotactic and angiogenic properties, it has strong antibacterial activity against Gram-positive and Gram-negative bacteria (90-fold-higher when compared to CXCL5 and CXCL7). The protein is C-X-C motif chemokine 6 (CXCL6) of Bos taurus (Bovine).